The chain runs to 385 residues: Lipid-A-disaccharide synthase (385 aa).

The protein belongs to the LpxB family.

The enzyme catalyses 2-N,3-O-bis[(3R)-3-hydroxytetradecanoyl]-alpha-D-glucosaminyl 1-phosphate + UDP-2-N,3-O-bis[(3R)-3-hydroxytetradecanoyl]-alpha-D-glucosamine = lipid A disaccharide (E. coli) + UDP + H(+). The catalysed reaction is a lipid X + a UDP-2-N,3-O-bis[(3R)-3-hydroxyacyl]-alpha-D-glucosamine = a lipid A disaccharide + UDP + H(+). It functions in the pathway glycolipid biosynthesis; lipid IV(A) biosynthesis; lipid IV(A) from (3R)-3-hydroxytetradecanoyl-[acyl-carrier-protein] and UDP-N-acetyl-alpha-D-glucosamine: step 5/6. Its function is as follows. Condensation of UDP-2,3-diacylglucosamine and 2,3-diacylglucosamine-1-phosphate to form lipid A disaccharide, a precursor of lipid A, a phosphorylated glycolipid that anchors the lipopolysaccharide to the outer membrane of the cell. The polypeptide is Lipid-A-disaccharide synthase (Wigglesworthia glossinidia brevipalpis).